Consider the following 310-residue polypeptide: MIYFFISSLFFLILITLMFSKNIFKNIKKIKLFSKNNFFFYFLLFVLFIFIFWLVVYTDQGIKVANQKIIYFLTSYFLEILLSIDNVFAWFFIFKSLKIPLIYQKKVLLYGLWGALILRSIFSFSGSFLFSKWHWILYLFGGFFILTSLKFIFFSNLECDNKEENIKKLWIYKFFRVTENINNENFFVKIEKKIFITPLFVSLILIELSDIVFSVDSIPAALSVNNDLFIIFSSNFFAVLGLRSMYLFTAYFLKNFPIMKYALSLILMFIGFKILIEKFFTFSIFLTLAVILIILITTFLINLIFNLKKC.

The next 9 membrane-spanning stretches (helical) occupy residues 1–21, 38–58, 74–94, 110–130, 135–155, 194–214, 228–248, 256–276, and 284–304; these read MIYF…MFSK, FFFY…VVYT, TSYF…FFIF, YGLW…SFLF, WILY…IFFS, IFIT…IVFS, LFII…MYLF, FPIM…KILI, and IFLT…INLI.

This sequence belongs to the TerC family.

Its subcellular location is the cell membrane. This is an uncharacterized protein from Buchnera aphidicola subsp. Schizaphis graminum (strain Sg).